Reading from the N-terminus, the 231-residue chain is Small ribosomal subunit protein uS3 (231 aa).

Residues 17 to 86 (VEQYLNKELK…SPQVEVQQVA (70 aa)) form the KH type-2 domain.

This sequence belongs to the universal ribosomal protein uS3 family. As to quaternary structure, part of the 30S ribosomal subunit.

In terms of biological role, binds the lower part of the 30S subunit head. The sequence is that of Small ribosomal subunit protein uS3 from Methanocorpusculum labreanum (strain ATCC 43576 / DSM 4855 / Z).